A 132-amino-acid chain; its full sequence is Fatty acid-binding protein, intestinal (132 aa).

Position 2 is an N-acetylalanine (A2). Hexadecanoate contacts are provided by W83 and R107. Tetradecanoate contacts are provided by W83 and R107.

It belongs to the calycin superfamily. Fatty-acid binding protein (FABP) family.

Its subcellular location is the cytoplasm. FABPs are thought to play a role in the intracellular transport of long-chain fatty acids and their acyl-CoA esters. FABP2 is probably involved in triglyceride-rich lipoprotein synthesis. Binds saturated long-chain fatty acids with a high affinity, but binds with a lower affinity to unsaturated long-chain fatty acids. FABP2 may also help maintain energy homeostasis by functioning as a lipid sensor. This Sus scrofa (Pig) protein is Fatty acid-binding protein, intestinal (FABP2).